The following is a 45-amino-acid chain: Natriuretic peptide OsNP-d (45 aa).

Positions 1 to 5 are excised as a propeptide; the sequence is PAAGL. Cys14 and Cys30 are oxidised to a cystine.

It belongs to the natriuretic peptide family. As to expression, expressed by the venom gland.

The protein resides in the secreted. Its function is as follows. Snake venom natriuretic peptide that targets both NPR1 and NPR2. Exhibits hypotensive and vasodepressor activities. This Oxyuranus scutellatus scutellatus (Australian taipan) protein is Natriuretic peptide OsNP-d.